The chain runs to 37 residues: Large ribosomal subunit protein bL36 (37 aa).

Belongs to the bacterial ribosomal protein bL36 family.

This is Large ribosomal subunit protein bL36 from Halalkalibacterium halodurans (strain ATCC BAA-125 / DSM 18197 / FERM 7344 / JCM 9153 / C-125) (Bacillus halodurans).